A 569-amino-acid polypeptide reads, in one-letter code: BICD family-like cargo adapter 1 (569 aa).

Positions 1–36 are disordered; that stretch reads MSASCLDLISAPPQPDSDRMDRALNPGRQNSPDTAG. Residues 97-101 carry the CC1 box motif; the sequence is AAKLG. Residues 102 to 283 adopt a coiled-coil conformation; sequence KALLERNQDL…TLELEKHCHH (182 aa). Residues 385 to 405 form a disordered region; sequence ALSTDSSMDESSETLSAKDVP. Positions 458–520 form a coiled coil; sequence NEQLQSAIRD…LEAWQDDMHR (63 aa). The interval 533-554 is disordered; that stretch reads EWKDPPFSFSRRGAAASRPTQR.

The protein belongs to the BICDR family. Part of a tripartite complex with dynein and dynactin, acts an adapter linking the dynein motor complex and dynactin. Highly expressed in developing neural tissues and developing eye.

Its subcellular location is the cytoplasm. It is found in the cytoskeleton. The protein resides in the microtubule organizing center. It localises to the centrosome. Acts as an adapter protein linking the dynein motor complex to various cargos and converts dynein from a non-processive to a highly processive motor in the presence of dynactin. Facilitates the interaction between dynein and dynactin and activates dynein processivity (the ability to move along a microtubule for a long distance without falling off the track). Predominantly recruits 2 dyneins, which increases both the force and speed of the microtubule motor. Component of secretory vesicle machinery in developing neurons that acts as a regulator of neurite outgrowth. Regulates the secretory vesicle transport by controlling the accumulation of Rab6-containing secretory vesicles in the pericentrosomal region restricting anterograde secretory transport during the early phase of neuronal differentiation, thereby inhibiting neuritogenesis. The chain is BICD family-like cargo adapter 1 (bicdl1) from Danio rerio (Zebrafish).